The sequence spans 258 residues: Imidazole glycerol phosphate synthase subunit HisF (258 aa).

Active-site residues include Asp11 and Asp130.

This sequence belongs to the HisA/HisF family. Heterodimer of HisH and HisF.

It is found in the cytoplasm. It carries out the reaction 5-[(5-phospho-1-deoxy-D-ribulos-1-ylimino)methylamino]-1-(5-phospho-beta-D-ribosyl)imidazole-4-carboxamide + L-glutamine = D-erythro-1-(imidazol-4-yl)glycerol 3-phosphate + 5-amino-1-(5-phospho-beta-D-ribosyl)imidazole-4-carboxamide + L-glutamate + H(+). It participates in amino-acid biosynthesis; L-histidine biosynthesis; L-histidine from 5-phospho-alpha-D-ribose 1-diphosphate: step 5/9. Its function is as follows. IGPS catalyzes the conversion of PRFAR and glutamine to IGP, AICAR and glutamate. The HisF subunit catalyzes the cyclization activity that produces IGP and AICAR from PRFAR using the ammonia provided by the HisH subunit. The sequence is that of Imidazole glycerol phosphate synthase subunit HisF from Xanthomonas campestris pv. campestris (strain B100).